Reading from the N-terminus, the 432-residue chain is Mannan endo-1,4-beta-mannosidase 1 (432 aa).

The signal sequence occupies residues 1–28 (MRLLGAHRAALLVLACVVVVVIHGLGEA). Substrate is bound by residues tryptophan 93 and asparagine 209. Glutamate 210 functions as the Proton donor in the catalytic mechanism. Position 289 (tyrosine 289) interacts with substrate. Catalysis depends on glutamate 329, which acts as the Nucleophile. Tryptophan 371 is a binding site for substrate.

Belongs to the glycosyl hydrolase 5 (cellulase A) family. Ubiquitous.

The protein resides in the secreted. It catalyses the reaction Random hydrolysis of (1-&gt;4)-beta-D-mannosidic linkages in mannans, galactomannans and glucomannans.. The sequence is that of Mannan endo-1,4-beta-mannosidase 1 (MAN1) from Oryza sativa subsp. japonica (Rice).